A 367-amino-acid polypeptide reads, in one-letter code: MSLSRVSVTGVRNLHPVTLSPSPRINILYGANGSGKTSVLEAIHLLGIARSFRSSRLLPVIQYEQPSCTVFGQVDLAQGGHSNLGVSRDRQGEFQIRIDGQNARSAAQLAEILPLQLINPDSFRLLEGAPKIRRQFLDWGVFHVEPRFMSTWQRLQKALKQRNSWLRHGTLDAASQAAWDRELCLASDEIDEFRRAYIKALKPVFEKTLSELVELEGLTLSYYRGWDKEKELSTVLASSLNRDQQMGHTQAGPQRADLRLRLGAHNAADILSRGQQKLVVCALRIAQGHLVSQVRRGQCIYLVDDLPSELDDNHRRALCRLLEELRCQVFITCVDQEFLREGWQTDTPVALFHVEQGRITQTHDHRE.

30–37 (GANGSGKT) lines the ATP pocket.

This sequence belongs to the RecF family.

It localises to the cytoplasm. Its function is as follows. The RecF protein is involved in DNA metabolism; it is required for DNA replication and normal SOS inducibility. RecF binds preferentially to single-stranded, linear DNA. It also seems to bind ATP. The protein is DNA replication and repair protein RecF of Pseudomonas syringae pv. tomato (strain ATCC BAA-871 / DC3000).